The primary structure comprises 262 residues: Small ribosomal subunit protein eS4B (262 aa).

The 64-residue stretch at 42–105 (LPLIVFLRNR…GEHFRLVYDI (64 aa)) folds into the S4 RNA-binding domain. At serine 223 the chain carries Phosphoserine.

This sequence belongs to the eukaryotic ribosomal protein eS4 family. In terms of assembly, component of the small ribosomal subunit (SSU). Mature yeast ribosomes consist of a small (40S) and a large (60S) subunit. The 40S small subunit contains 1 molecule of ribosomal RNA (18S rRNA) and at least 33 different proteins. The large 60S subunit contains 3 rRNA molecules (25S, 5.8S and 5S rRNA) and at least 46 different proteins.

The protein resides in the cytoplasm. Its subcellular location is the nucleus. The protein localises to the nucleolus. Functionally, component of the ribosome, a large ribonucleoprotein complex responsible for the synthesis of proteins in the cell. The small ribosomal subunit (SSU) binds messenger RNAs (mRNAs) and translates the encoded message by selecting cognate aminoacyl-transfer RNA (tRNA) molecules. The large subunit (LSU) contains the ribosomal catalytic site termed the peptidyl transferase center (PTC), which catalyzes the formation of peptide bonds, thereby polymerizing the amino acids delivered by tRNAs into a polypeptide chain. The nascent polypeptides leave the ribosome through a tunnel in the LSU and interact with protein factors that function in enzymatic processing, targeting, and the membrane insertion of nascent chains at the exit of the ribosomal tunnel. This Schizosaccharomyces pombe (strain 972 / ATCC 24843) (Fission yeast) protein is Small ribosomal subunit protein eS4B (rps402).